Consider the following 354-residue polypeptide: GTPase Obg (354 aa).

Residues 1 to 159 (MKFVDEVKIH…RDLVLELKLL (159 aa)) form the Obg domain. The region spanning 160–333 (ADVGIVGYPN…LLDAVGRALF (174 aa)) is the OBG-type G domain. GTP-binding positions include 166 to 173 (GYPNAGKS), 191 to 195 (FTTLT), 212 to 215 (DIPG), 283 to 286 (TKID), and 314 to 316 (SAV). Residues Ser173 and Thr193 each coordinate Mg(2+).

The protein belongs to the TRAFAC class OBG-HflX-like GTPase superfamily. OBG GTPase family. Monomer. It depends on Mg(2+) as a cofactor.

It localises to the cytoplasm. Its function is as follows. An essential GTPase which binds GTP, GDP and possibly (p)ppGpp with moderate affinity, with high nucleotide exchange rates and a fairly low GTP hydrolysis rate. Plays a role in control of the cell cycle, stress response, ribosome biogenesis and in those bacteria that undergo differentiation, in morphogenesis control. The protein is GTPase Obg of Anaeromyxobacter sp. (strain K).